Consider the following 190-residue polypeptide: UPF0301 protein DP2218 (190 aa).

Belongs to the UPF0301 (AlgH) family.

The polypeptide is UPF0301 protein DP2218 (Desulfotalea psychrophila (strain LSv54 / DSM 12343)).